A 240-amino-acid polypeptide reads, in one-letter code: tRNA (guanine-N(1)-)-methyltransferase (240 aa).

S-adenosyl-L-methionine-binding positions include G108 and 127–132; that span reads LGDFIL.

The protein belongs to the RNA methyltransferase TrmD family. In terms of assembly, homodimer.

It localises to the cytoplasm. The enzyme catalyses guanosine(37) in tRNA + S-adenosyl-L-methionine = N(1)-methylguanosine(37) in tRNA + S-adenosyl-L-homocysteine + H(+). In terms of biological role, specifically methylates guanosine-37 in various tRNAs. The polypeptide is tRNA (guanine-N(1)-)-methyltransferase (Streptococcus mutans serotype c (strain ATCC 700610 / UA159)).